The following is a 209-amino-acid chain: Xanthine phosphoribosyltransferase 1 (209 aa).

S79 is modified (phosphoserine).

It is found in the cytoplasm. Functionally, may act as a xanthine phosphoribosyltransferase involved in the synthesis of purine nucleotides. Such activity is however unclear in vivo. In Saccharomyces cerevisiae (strain ATCC 204508 / S288c) (Baker's yeast), this protein is Xanthine phosphoribosyltransferase 1 (XPT1).